The primary structure comprises 336 residues: Glycerol-3-phosphate dehydrogenase [NAD(P)+] (336 aa).

4 residues coordinate NADPH: serine 13, tryptophan 14, arginine 34, and lysine 108. Sn-glycerol 3-phosphate is bound by residues lysine 108, glycine 138, and serine 140. Position 142 (alanine 142) interacts with NADPH. Sn-glycerol 3-phosphate is bound by residues lysine 193, aspartate 246, serine 256, arginine 257, and asparagine 258. Lysine 193 (proton acceptor) is an active-site residue. Arginine 257 is an NADPH binding site. The NADPH site is built by valine 281 and glutamate 283.

The protein belongs to the NAD-dependent glycerol-3-phosphate dehydrogenase family.

Its subcellular location is the cytoplasm. The catalysed reaction is sn-glycerol 3-phosphate + NAD(+) = dihydroxyacetone phosphate + NADH + H(+). It catalyses the reaction sn-glycerol 3-phosphate + NADP(+) = dihydroxyacetone phosphate + NADPH + H(+). It functions in the pathway membrane lipid metabolism; glycerophospholipid metabolism. Catalyzes the reduction of the glycolytic intermediate dihydroxyacetone phosphate (DHAP) to sn-glycerol 3-phosphate (G3P), the key precursor for phospholipid synthesis. The sequence is that of Glycerol-3-phosphate dehydrogenase [NAD(P)+] from Carboxydothermus hydrogenoformans (strain ATCC BAA-161 / DSM 6008 / Z-2901).